We begin with the raw amino-acid sequence, 610 residues long: UvrABC system protein C (610 aa).

The GIY-YIG domain maps to 16 to 94 (SQPGVYRMYD…IKLYQPRYNV (79 aa)). In terms of domain architecture, UVR spans 204–239 (DQVINQLVSRMEQASQNLAFEEAARLRDQIQAVRRV).

It belongs to the UvrC family. As to quaternary structure, interacts with UvrB in an incision complex.

Its subcellular location is the cytoplasm. In terms of biological role, the UvrABC repair system catalyzes the recognition and processing of DNA lesions. UvrC both incises the 5' and 3' sides of the lesion. The N-terminal half is responsible for the 3' incision and the C-terminal half is responsible for the 5' incision. The polypeptide is UvrABC system protein C (Cronobacter sakazakii (strain ATCC BAA-894) (Enterobacter sakazakii)).